A 724-amino-acid chain; its full sequence is MAFVSRIRRQSDYNTYPSSIPIVIDNGASYFRIGWAGETEPRVVFRNIVQRPRHKATGETVTIVGDLDPSMMKYFDCTRSGPRSPFDSNVVYQFEIMEYILDYAFDRLGANGSGIDHPILITECACNPVQSRSKMAELLFETYGVPAVAFGVDAAFSYKYNQLHGICKKDGIVLCPGFTTTHSIPFVDGEPIYKGSSRTNIGGYHVTDYLKQLLSLKYPFHSSRFTWEKAEDLKLEHCYIAPDYASEIRLFQEGRKEAEEKTSYWQLPWIPPPTEVPPSEEEIARKAAIREKQGQRLREMAEAKRVSKINDMENQLISLRFLLKQVDQVEEDDIPTFLSDTGYASRQELESTITKVTQSLRKARGEPKNEPAEYEENPDSLNNEKYPLMNVPDDILTPEQLKDKKRQMFLKTTAEGRLRARQKRNEEELEKEKRNQLEEERRRENPESYLEELQAQYKEVLERVEQKKRLKTNGSSNGNNKSGGIGRGERLSAAQRERMRLLTTAAFDRGKGEDTFGSRDEDWQLYKLMSKDNDDDDEQPDSDEAELARLSSRLQEIDPTFVQKVEGELSQTSGEVPRVRPLTEEDYKIVIGIERFRCPEILFHPNLIGIDQVGLDEMAGTSIRRLPHDEKELEERLTSSILMTGGCSLLPGMNERLECGIRMIRPCGSPINVVRAMDPVLDAWRGASAFAANLNFLGNAFTKMDYDEKGEDWLRNYQIRYNYL.

3 disordered regions span residues 358 to 391, 412 to 450, and 467 to 488; these read QSLRKARGEPKNEPAEYEENPDSLNNEKYPLMNV, TTAEGRLRARQKRNEEELEKEKRNQLEEERRRENPESYL, and KKRLKTNGSSNGNNKSGGIGRG. A compositionally biased stretch (basic and acidic residues) spans 414-446; the sequence is AEGRLRARQKRNEEELEKEKRNQLEEERRRENP. Serine 542 is modified (phosphoserine).

The protein belongs to the actin family. ARP5 subfamily. In terms of assembly, component of the INO80 chromatin-remodeling complex. Interacts with EEN. Expressed ubiquitously in seedlings, roots, leaves, buds, flowers and siliques.

Its subcellular location is the nucleus. It is found in the nucleoplasm. The protein resides in the cytoplasm. Functionally, probable subunit of a chromatin-remodeling complex. Involved in DNA repair. Required for multicellular development of all organs. In Arabidopsis thaliana (Mouse-ear cress), this protein is Actin-related protein 5.